Reading from the N-terminus, the 362-residue chain is MALSMDNIVISNEEEIYMMKAMHIPCGLYLNMVLRAAIELDLFEIIAKSTTQKLSSYEIASQIPTKNPNASSLVLERILRFLASQSFLTCNITKNDDGNVHTSYNLTPLSQSLISDKDGSSLAPFLLLHSESVVVNSCFLLKDAILQGEVPFNKAYGMNAFEYTKKDSRMNGLFNKAMQNVTCIEMKKIVECYNGFEGVKETIDVGGGLGISLASIISKYPNIKGINFDLPHVIKDAPTYEGIEHVGGDMLKSVPQGELIILKEILHNWDDEDCVKILKNCWRALPNDGKVVVIEQIQPEYPETNLLSKHLFALDISMMIMFHGGKERTKQQFEDLAKQAGFTSIKVMARAYYYWVIEFYKY.

Position 229 (D229) interacts with S-adenosyl-L-methionine. H267 functions as the Proton acceptor in the catalytic mechanism.

This sequence belongs to the class I-like SAM-binding methyltransferase superfamily. Cation-independent O-methyltransferase family. As to quaternary structure, homodimer. As to expression, mainly expressed in stem and petiole trichomes.

The enzyme catalyses myricetin + S-adenosyl-L-methionine = laricitrin + S-adenosyl-L-homocysteine + H(+). It functions in the pathway flavonoid metabolism. Its function is as follows. Flavonoid 3'-O-methyltransferase involved in the biosynthesis of polymethoxylated flavonoids natural products such as myricetin derivatives, aroma compounds possessing antioxidant properties and exhibiting pharmacological activities such as anti-carcinogen, anti-viral, anti-thrombotic, anti-diabetic, anti-atherosclerotic, and anti-inflammatory effects. Catalyzes S-adenosylmethionine-dependent regioselective 3'-O-methylation of flavonoids; active on various hydroxylated flavonoid substrates, including myricetin, thus producing 3'-methyl myricetin (laricitrin). The chain is Myricetin 3'-O-methyltransferase 4 from Solanum lycopersicum (Tomato).